The following is a 130-amino-acid chain: Glycine cleavage system H protein (130 aa).

Residues I25 to R107 form the Lipoyl-binding domain. N6-lipoyllysine is present on K66.

This sequence belongs to the GcvH family. In terms of assembly, the glycine cleavage system is composed of four proteins: P, T, L and H. Requires (R)-lipoate as cofactor.

The glycine cleavage system catalyzes the degradation of glycine. The H protein shuttles the methylamine group of glycine from the P protein to the T protein. This is Glycine cleavage system H protein from Nostoc sp. (strain PCC 7120 / SAG 25.82 / UTEX 2576).